A 367-amino-acid chain; its full sequence is UDP-N-acetylglucosamine--N-acetylmuramyl-(pentapeptide) pyrophosphoryl-undecaprenol N-acetylglucosamine transferase (367 aa).

UDP-N-acetyl-alpha-D-glucosamine-binding positions include 13-15 (TGG), Arg-168, Ser-196, Ile-252, and Gln-297.

The protein belongs to the glycosyltransferase 28 family. MurG subfamily.

The protein localises to the cell inner membrane. The enzyme catalyses di-trans,octa-cis-undecaprenyl diphospho-N-acetyl-alpha-D-muramoyl-L-alanyl-D-glutamyl-meso-2,6-diaminopimeloyl-D-alanyl-D-alanine + UDP-N-acetyl-alpha-D-glucosamine = di-trans,octa-cis-undecaprenyl diphospho-[N-acetyl-alpha-D-glucosaminyl-(1-&gt;4)]-N-acetyl-alpha-D-muramoyl-L-alanyl-D-glutamyl-meso-2,6-diaminopimeloyl-D-alanyl-D-alanine + UDP + H(+). It participates in cell wall biogenesis; peptidoglycan biosynthesis. In terms of biological role, cell wall formation. Catalyzes the transfer of a GlcNAc subunit on undecaprenyl-pyrophosphoryl-MurNAc-pentapeptide (lipid intermediate I) to form undecaprenyl-pyrophosphoryl-MurNAc-(pentapeptide)GlcNAc (lipid intermediate II). This chain is UDP-N-acetylglucosamine--N-acetylmuramyl-(pentapeptide) pyrophosphoryl-undecaprenol N-acetylglucosamine transferase, found in Methylibium petroleiphilum (strain ATCC BAA-1232 / LMG 22953 / PM1).